A 328-amino-acid chain; its full sequence is Stress response kinase A (328 aa).

The Proton acceptor role is filled by Asp201. Mg(2+) is bound by residues Asn206 and Asp217. The active site involves Asp217.

This sequence belongs to the SrkA/RdoA protein kinase family. Monomer. It depends on Mg(2+) as a cofactor.

The protein localises to the cytoplasm. It carries out the reaction L-seryl-[protein] + ATP = O-phospho-L-seryl-[protein] + ADP + H(+). It catalyses the reaction L-threonyl-[protein] + ATP = O-phospho-L-threonyl-[protein] + ADP + H(+). Its function is as follows. A protein kinase that phosphorylates Ser and Thr residues. Probably acts to suppress the effects of stress linked to accumulation of reactive oxygen species. Probably involved in the extracytoplasmic stress response. The polypeptide is Stress response kinase A (Escherichia coli O6:H1 (strain CFT073 / ATCC 700928 / UPEC)).